Here is a 125-residue protein sequence, read N- to C-terminus: Alpha-endosulfine (125 aa).

The segment covering 1 to 37 (MSDKYIGDSHLEETGEEKQDSQEKEAVTPEKAEEQKL) has biased composition (basic and acidic residues). The disordered stretch occupies residues 1-52 (MSDKYIGDSHLEETGEEKQDSQEKEAVTPEKAEEQKLKAKYPNLGQKPGGSD). T28 carries the phosphothreonine; by CDK2 modification. S67 carries the phosphoserine; by GWL modification. Residues 86–107 (GPDKNLVTGDHIPTPQDLPQRK) form a disordered region. T99 carries the post-translational modification Phosphothreonine; by CDK2. Position 109 is a phosphoserine; by PKA (S109).

This sequence belongs to the endosulfine family. Interacts (when phosphorylated at Ser-67) with ppp2r2d. Post-translationally, phosphorylation at Ser-67 by gwl during mitosis is essential for interaction with PPP2R2D (PR55-delta) and subsequent inactivation of PP2A. Phosphorylated by PKA.

Its subcellular location is the cytoplasm. Functionally, protein phosphatase inhibitor that specifically inhibits protein phosphatase 2A (PP2A) during mitosis. When phosphorylated at Ser-67 during mitosis, specifically interacts with ppp2r2d (PR55-delta) and inhibits its activity, leading to inactivation of PP2A, an essential condition to keep cyclin-B1-CDK1 activity high during M phase. The polypeptide is Alpha-endosulfine (ensa) (Xenopus laevis (African clawed frog)).